We begin with the raw amino-acid sequence, 966 residues long: Leucine--tRNA ligase (966 aa).

The 'HIGH' region signature appears at 41-51; the sequence is PYLNGNLHAGH. The 'KMSKS' region signature appears at 632–636; the sequence is KMSKS. An ATP-binding site is contributed by K635.

This sequence belongs to the class-I aminoacyl-tRNA synthetase family.

Its subcellular location is the cytoplasm. It catalyses the reaction tRNA(Leu) + L-leucine + ATP = L-leucyl-tRNA(Leu) + AMP + diphosphate. The chain is Leucine--tRNA ligase from Methanosarcina mazei (strain ATCC BAA-159 / DSM 3647 / Goe1 / Go1 / JCM 11833 / OCM 88) (Methanosarcina frisia).